Consider the following 396-residue polypeptide: Putative nickel insertion protein (396 aa).

It belongs to the LarC family.

This Methanosarcina acetivorans (strain ATCC 35395 / DSM 2834 / JCM 12185 / C2A) protein is Putative nickel insertion protein.